Reading from the N-terminus, the 684-residue chain is Fidgetin-like protein 2 (684 aa).

Positions 27–41 (PEQHLDVSSTTSSPA) are enriched in polar residues. Disordered stretches follow at residues 27 to 48 (PEQHLDVSSTTSSPAHKSELYS), 99 to 179 (PGAF…PHSS), and 292 to 403 (LDEE…SDPM). Residues 160–179 (SNLSDSGYSGSSSCSGPHSS) are compositionally biased toward low complexity. Ala431 is an ATP binding site.

Belongs to the AAA ATPase family. The cofactor is Mg(2+). Highly expressed in vascular endothelial cells and neuronal cells.

The protein resides in the cytoplasm. The protein localises to the cell cortex. It carries out the reaction ATP + H2O = ADP + phosphate + H(+). Microtubule-severing enzyme that negatively regulates cell migration and wound healing. In migrating cells, targets dynamic microtubules (MTs) at the leading edge and severs them, thereby suppressing motility. Negative regulator of axon regeneration that suppresses axonal growth by selectively severing dynamic MTs in the distal axon shaft and growth cone. Contributes to proper cell branching during endothelial and neuronal development. The chain is Fidgetin-like protein 2 (fignl2) from Danio rerio (Zebrafish).